Here is a 336-residue protein sequence, read N- to C-terminus: Eukaryotic translation initiation factor 3 subunit H (336 aa).

The 134-residue stretch at 21–154 folds into the MPN domain; sequence VQCDGLAAMK…LKAYRLTPQA (134 aa).

Belongs to the eIF-3 subunit H family. As to quaternary structure, component of the eukaryotic translation initiation factor 3 (eIF-3) complex.

It is found in the cytoplasm. Its function is as follows. Component of the eukaryotic translation initiation factor 3 (eIF-3) complex, which is involved in protein synthesis of a specialized repertoire of mRNAs and, together with other initiation factors, stimulates binding of mRNA and methionyl-tRNAi to the 40S ribosome. The eIF-3 complex specifically targets and initiates translation of a subset of mRNAs involved in cell proliferation. The polypeptide is Eukaryotic translation initiation factor 3 subunit H (Culex quinquefasciatus (Southern house mosquito)).